Here is a 215-residue protein sequence, read N- to C-terminus: Large ribosomal subunit protein uL3 (215 aa).

A disordered region spans residues 136-155 (GVSISHRSHGSTGQRQDPGK). An N5-methylglutamine modification is found at Gln-151.

Belongs to the universal ribosomal protein uL3 family. In terms of assembly, part of the 50S ribosomal subunit. Forms a cluster with proteins L14 and L19. Post-translationally, methylated by PrmB.

Functionally, one of the primary rRNA binding proteins, it binds directly near the 3'-end of the 23S rRNA, where it nucleates assembly of the 50S subunit. In Rickettsia africae (strain ESF-5), this protein is Large ribosomal subunit protein uL3.